Consider the following 78-residue polypeptide: MTLKVPCPQCQKTVVWQASSEFRPFCSKRCQLIDLGEWAEESHKISQNIQVDTVLSEEMLDAMEDEFLLNNKFFVEPE.

Zn(2+) is bound by residues cysteine 7, cysteine 10, cysteine 26, and cysteine 30.

This sequence belongs to the DNA gyrase inhibitor YacG family. As to quaternary structure, interacts with GyrB. It depends on Zn(2+) as a cofactor.

In terms of biological role, inhibits all the catalytic activities of DNA gyrase by preventing its interaction with DNA. Acts by binding directly to the C-terminal domain of GyrB, which probably disrupts DNA binding by the gyrase. The polypeptide is DNA gyrase inhibitor YacG (Colwellia psychrerythraea (strain 34H / ATCC BAA-681) (Vibrio psychroerythus)).